Here is a 348-residue protein sequence, read N- to C-terminus: Putative agmatine deiminase (348 aa).

The active-site Amidino-cysteine intermediate is the Cys335.

The protein belongs to the agmatine deiminase family.

The enzyme catalyses agmatine + H2O = N-carbamoylputrescine + NH4(+). This is Putative agmatine deiminase from Legionella pneumophila subsp. pneumophila (strain Philadelphia 1 / ATCC 33152 / DSM 7513).